Here is a 454-residue protein sequence, read N- to C-terminus: UDP-N-acetylmuramoylalanine--D-glutamate ligase (454 aa).

115-121 (GTNGKTT) is a binding site for ATP.

The protein belongs to the MurCDEF family.

The protein resides in the cytoplasm. It catalyses the reaction UDP-N-acetyl-alpha-D-muramoyl-L-alanine + D-glutamate + ATP = UDP-N-acetyl-alpha-D-muramoyl-L-alanyl-D-glutamate + ADP + phosphate + H(+). The protein operates within cell wall biogenesis; peptidoglycan biosynthesis. Cell wall formation. Catalyzes the addition of glutamate to the nucleotide precursor UDP-N-acetylmuramoyl-L-alanine (UMA). The sequence is that of UDP-N-acetylmuramoylalanine--D-glutamate ligase from Thermoanaerobacter sp. (strain X514).